The following is a 595-amino-acid chain: Aspartate--tRNA(Asp/Asn) ligase (595 aa).

Glutamate 178 provides a ligand contact to L-aspartate. The interval 202–205 (QIFK) is aspartate. Position 224 (arginine 224) interacts with L-aspartate. Residues 224–226 (RDE) and glutamine 233 each bind ATP. Histidine 458 is an L-aspartate binding site. Glutamate 488 contacts ATP. Arginine 495 is a binding site for L-aspartate. 540-543 (GIDR) serves as a coordination point for ATP.

This sequence belongs to the class-II aminoacyl-tRNA synthetase family. Type 1 subfamily. Homodimer.

It localises to the cytoplasm. It catalyses the reaction tRNA(Asx) + L-aspartate + ATP = L-aspartyl-tRNA(Asx) + AMP + diphosphate. Its function is as follows. Aspartyl-tRNA synthetase with relaxed tRNA specificity since it is able to aspartylate not only its cognate tRNA(Asp) but also tRNA(Asn). Reaction proceeds in two steps: L-aspartate is first activated by ATP to form Asp-AMP and then transferred to the acceptor end of tRNA(Asp/Asn). The polypeptide is Aspartate--tRNA(Asp/Asn) ligase (Acaryochloris marina (strain MBIC 11017)).